A 73-amino-acid polypeptide reads, in one-letter code: Large ribosomal subunit protein bL31 (73 aa).

A compositionally biased stretch (basic and acidic residues) spans lysine 34–serine 43. The interval lysine 34 to methionine 54 is disordered.

Belongs to the bacterial ribosomal protein bL31 family. Type A subfamily. Part of the 50S ribosomal subunit.

Binds the 23S rRNA. The polypeptide is Large ribosomal subunit protein bL31 (Rhodopseudomonas palustris (strain BisA53)).